The chain runs to 427 residues: Amino acid transporter AVT3A (427 aa).

The interval 1–35 (MRYDQEAGSSSHSLPSGSSSHSLPPTEDTPLLGPR) is disordered. The Cytoplasmic segment spans residues 1–42 (MRYDQEAGSSSHSLPSGSSSHSLPPTEDTPLLGPRTLSSQPK). A compositionally biased stretch (low complexity) spans 8 to 24 (GSSSHSLPSGSSSHSLP). Residues 43-63 (TFANVFIAIVGAGVLGLPYTF) form a helical membrane-spanning segment. Over 64 to 69 (KKTGWL) the chain is Vacuolar. Residues 70–90 (LGLLTLLFVSSLTFFCMMLLV) traverse the membrane as a helical segment. Residues 91 to 122 (HTRRKLESLSGFNSITSFGDLGESVCGPAGRL) are Cytoplasmic-facing. Residues 123–143 (VVDVMLVLSQSGFCVSYLIFV) traverse the membrane as a helical segment. Topologically, residues 144–157 (ATTMANLLSRGTEH) are vacuolar. The helical transmembrane segment at 158 to 178 (ILGLDAASIYLWGCFPFQLGL) threads the bilayer. Residues 179–186 (NSIPSLTH) lie on the Cytoplasmic side of the membrane. Residues 187–207 (LAPLSIFADIVDVAATLVVMV) traverse the membrane as a helical segment. The Vacuolar segment spans residues 208–227 (QDVFIFLKRRPPLRVFGGVS). The helical transmembrane segment at 228–248 (VFFYGLGVAVYAFEGIGMVLP) threads the bilayer. The Cytoplasmic segment spans residues 249–262 (LELEAKYKDKFGRA). A helical transmembrane segment spans residues 263–283 (LGLAMGLISIMYGAFGLLGYM). Residues 284–300 (AYGEETKDIITTNLGTG) lie on the Vacuolar side of the membrane. A helical transmembrane segment spans residues 301 to 321 (VVSTLVQLGLAINLFFTFPLM). The Cytoplasmic segment spans residues 322-339 (MQPVYEVVERRLCSSRYS). The chain crosses the membrane as a helical span at residues 340 to 360 (VWVRWATVLVVTLVALLVPNF). Over 361-362 (AD) the chain is Vacuolar. A helical membrane pass occupies residues 363 to 383 (FLSLVGSSVCVVLGFVLPSLF). Topologically, residues 384–396 (HLQAFKNELSITR) are cytoplasmic. A helical transmembrane segment spans residues 397 to 417 (IVVDVLVFLIGVMIAITGTWT). Topologically, residues 418-427 (AVHEILTSKA) are vacuolar.

The protein belongs to the amino acid/polyamine transporter 2 family. Amino acid/auxin permease (AAAP) (TC 2.A.18.8) subfamily. As to expression, ubiquitous.

The protein resides in the vacuole membrane. Translocates preferentially neutral amino acids and to a lesser extent aromatic amino acids from the vacuole to the cytoplasm. Requires ATP for function. The sequence is that of Amino acid transporter AVT3A from Arabidopsis thaliana (Mouse-ear cress).